Consider the following 95-residue polypeptide: Small ribosomal subunit protein bS6 (95 aa).

It belongs to the bacterial ribosomal protein bS6 family.

Its function is as follows. Binds together with bS18 to 16S ribosomal RNA. In Exiguobacterium sibiricum (strain DSM 17290 / CCUG 55495 / CIP 109462 / JCM 13490 / 255-15), this protein is Small ribosomal subunit protein bS6.